We begin with the raw amino-acid sequence, 200 residues long: Protein GrpE (200 aa).

Belongs to the GrpE family. Homodimer.

It localises to the cytoplasm. In terms of biological role, participates actively in the response to hyperosmotic and heat shock by preventing the aggregation of stress-denatured proteins, in association with DnaK and GrpE. It is the nucleotide exchange factor for DnaK and may function as a thermosensor. Unfolded proteins bind initially to DnaJ; upon interaction with the DnaJ-bound protein, DnaK hydrolyzes its bound ATP, resulting in the formation of a stable complex. GrpE releases ADP from DnaK; ATP binding to DnaK triggers the release of the substrate protein, thus completing the reaction cycle. Several rounds of ATP-dependent interactions between DnaJ, DnaK and GrpE are required for fully efficient folding. This chain is Protein GrpE, found in Mycoplasma mycoides subsp. mycoides SC (strain CCUG 32753 / NCTC 10114 / PG1).